Consider the following 292-residue polypeptide: Protein/nucleic acid deglycase HchA (292 aa).

The span at 1 to 12 (MSQDVNELSKQP) shows a compositional bias: polar residues. A disordered region spans residues 1–23 (MSQDVNELSKQPTPDKAEDNAFF). Cys-190 acts as the Nucleophile in catalysis.

It belongs to the peptidase C56 family. HchA subfamily.

It localises to the cytoplasm. The catalysed reaction is N(omega)-(1-hydroxy-2-oxopropyl)-L-arginyl-[protein] + H2O = lactate + L-arginyl-[protein] + H(+). It catalyses the reaction N(6)-(1-hydroxy-2-oxopropyl)-L-lysyl-[protein] + H2O = lactate + L-lysyl-[protein] + H(+). The enzyme catalyses S-(1-hydroxy-2-oxopropyl)-L-cysteinyl-[protein] + H2O = lactate + L-cysteinyl-[protein] + H(+). It carries out the reaction N(omega)-(1-hydroxy-2-oxoethyl)-L-arginyl-[protein] + H2O = L-arginyl-[protein] + glycolate + H(+). The catalysed reaction is N(6)-(1-hydroxy-2-oxoethyl)-L-lysyl-[protein] + H2O = glycolate + L-lysyl-[protein] + H(+). It catalyses the reaction S-(1-hydroxy-2-oxoethyl)-L-cysteinyl-[protein] + H2O = glycolate + L-cysteinyl-[protein] + H(+). The enzyme catalyses N(2)-(1-hydroxy-2-oxopropyl)-dGTP + H2O = lactate + dGTP + H(+). It carries out the reaction N(2)-(1-hydroxy-2-oxopropyl)-GTP + H2O = lactate + GTP + H(+). The catalysed reaction is N(2)-(1-hydroxy-2-oxopropyl)-GDP + H2O = lactate + GDP + H(+). It catalyses the reaction N(2)-(1-hydroxy-2-oxopropyl)-GMP + H2O = lactate + GMP + H(+). The enzyme catalyses N(2)-(1-hydroxy-2-oxoethyl)-dGTP + H2O = dGTP + glycolate + H(+). It carries out the reaction N(2)-(1-hydroxy-2-oxoethyl)-GTP + H2O = glycolate + GTP + H(+). The catalysed reaction is N(2)-(1-hydroxy-2-oxoethyl)-GDP + H2O = glycolate + GDP + H(+). It catalyses the reaction N(2)-(1-hydroxy-2-oxoethyl)-GMP + H2O = glycolate + GMP + H(+). The enzyme catalyses an N(2)-(1-hydroxy-2-oxopropyl)-guanosine in RNA + H2O = a guanosine in RNA + lactate + H(+). It carries out the reaction an N(2)-(1-hydroxy-2-oxopropyl)-2'-deoxyguanosine in DNA + H2O = a 2'-deoxyguanosine in DNA + lactate + H(+). The catalysed reaction is an N(2)-(1-hydroxy-2-oxoethyl)-guanosine in RNA + H2O = a guanosine in RNA + glycolate + H(+). It catalyses the reaction an N(2)-(1-hydroxy-2-oxoethyl)-2'-deoxyguanosine in DNA + H2O = a 2'-deoxyguanosine in DNA + glycolate + H(+). Protein and nucleotide deglycase that catalyzes the deglycation of the Maillard adducts formed between amino groups of proteins or nucleotides and reactive carbonyl groups of glyoxals. Thus, functions as a protein deglycase that repairs methylglyoxal- and glyoxal-glycated proteins, and releases repaired proteins and lactate or glycolate, respectively. Deglycates cysteine, arginine and lysine residues in proteins, and thus reactivates these proteins by reversing glycation by glyoxals. Acts on early glycation intermediates (hemithioacetals and aminocarbinols), preventing the formation of Schiff bases and advanced glycation endproducts (AGE). Also functions as a nucleotide deglycase able to repair glycated guanine in the free nucleotide pool (GTP, GDP, GMP, dGTP) and in DNA and RNA. Is thus involved in a major nucleotide repair system named guanine glycation repair (GG repair), dedicated to reversing methylglyoxal and glyoxal damage via nucleotide sanitization and direct nucleic acid repair. Plays an important role in protecting cells from carbonyl stress. The protein is Protein/nucleic acid deglycase HchA of Staphylococcus aureus (strain Newman).